A 542-amino-acid polypeptide reads, in one-letter code: Katanin p60 ATPase-containing subunit A-like 2 (542 aa).

A LisH domain is found at 25–57; sequence RRKNLLILIMHYLLQEGYMDSANSLEQETKISL. Disordered stretches follow at residues 94–126 and 142–168; these read LDHD…RIAQ and HAHQ…ASEI. Over residues 114-126 the composition is skewed to polar residues; sequence GSNSTQGLPRIAQ. 298–305 serves as a coordination point for ATP; sequence GPPGTGKT.

This sequence belongs to the AAA ATPase family. Katanin p60 subunit A1 subfamily. A-like 2 sub-subfamily.

It localises to the cytoplasm. The protein resides in the cytoskeleton. It is found in the spindle. Its subcellular location is the spindle pole. It catalyses the reaction n ATP + n H2O + a microtubule = n ADP + n phosphate + (n+1) alpha/beta tubulin heterodimers.. Severs microtubules in vitro in an ATP-dependent manner. This activity may promote rapid reorganization of cellular microtubule arrays. This is Katanin p60 ATPase-containing subunit A-like 2 (katnal2) from Xenopus tropicalis (Western clawed frog).